Reading from the N-terminus, the 446-residue chain is MNVTPEVKSRGMKFAEEQLLKHGWTQGKGLGRKENGITQALRVTLKQDTHGVGHDPAKEFTNHWWNELFNKTAANLVVETGQDGVQIRSLSKETTRYNHPKPNLLYQKFVKMATLTSGGEKPNKDLESCSDDDNQGSKSPKILTDEMLLQACEGRTAHKAARLGITMKAKLARLEAQEQAFLARLKGQDPGAPQLQSESKPPKKKKKKRRQKEEEEATASERNDADEKHPEHAEQNIRKSKKKKRRHQEGKVSDEREGTTKGNEKEDAAGTSGLGELNSREQTNQSLRKGKKKKRWHHEEEKMGVLEEGGKGKEAAGSVRTEEVESRAYADPCSRRKKRQQQEEEDLNLEDRGEETVLGGGTREAESRACSDGRSRKSKKKRQQHQEEEDILDVRDEKDGGAREAESRAHTGSSSRGKRKRQQHPKKERAGVSTVQKAKKKQKKRD.

Met-1 carries the post-translational modification N-acetylmethionine. The residue at position 4 (Thr-4) is a Phosphothreonine. One can recognise a G-patch domain in the interval 11–57; the sequence is GMKFAEEQLLKHGWTQGKGLGRKENGITQALRVTLKQDTHGVGHDPA. Lys-46 participates in a covalent cross-link: Glycyl lysine isopeptide (Lys-Gly) (interchain with G-Cter in SUMO2). Thr-116 bears the Phosphothreonine mark. 2 disordered regions span residues 116 to 140 and 188 to 446; these read TSGGEKPNKDLESCSDDDNQGSKSP and QDPG…KKRD. A phosphoserine mark is found at Ser-128, Ser-130, and Ser-139. Residues 166–251 adopt a coiled-coil conformation; the sequence is TMKAKLARLE…KKKRRHQEGK (86 aa). Positions 219 to 237 are enriched in basic and acidic residues; sequence ASERNDADEKHPEHAEQNI. Residues 238–248 are compositionally biased toward basic residues; it reads RKSKKKKRRHQ. Basic and acidic residues-rich tracts occupy residues 249–268, 297–328, 363–375, and 392–409; these read EGKVSDEREGTTKGNEKEDA, HHEEEKMGVLEEGGKGKEAAGSVRTEEVESRA, REAESRACSDGRS, and LDVRDEKDGGAREAESRA. 2 stretches are compositionally biased toward basic residues: residues 416–427 and 437–446; these read RGKRKRQQHPKK and KAKKKQKKRD.

This Homo sapiens (Human) protein is G patch domain-containing protein 4 (GPATCH4).